A 253-amino-acid chain; its full sequence is tRNA uridine(34) hydroxylase (253 aa).

The region spanning 127 to 221 (HGRPLVLLDT…YFEDVGGEGY (95 aa)) is the Rhodanese domain. C181 (cysteine persulfide intermediate) is an active-site residue.

It belongs to the TrhO family.

It carries out the reaction uridine(34) in tRNA + AH2 + O2 = 5-hydroxyuridine(34) in tRNA + A + H2O. Its function is as follows. Catalyzes oxygen-dependent 5-hydroxyuridine (ho5U) modification at position 34 in tRNAs. This Xanthomonas campestris pv. campestris (strain B100) protein is tRNA uridine(34) hydroxylase.